A 314-amino-acid polypeptide reads, in one-letter code: Probable dimethyladenosine transferase (314 aa).

S-adenosyl-L-methionine contacts are provided by histidine 36, leucine 38, glycine 63, glutamate 84, aspartate 112, and asparagine 127.

It belongs to the class I-like SAM-binding methyltransferase superfamily. rRNA adenine N(6)-methyltransferase family. As to quaternary structure, part of the small subunit (SSU) processome, composed of more than 70 proteins and the RNA chaperone small nucleolar RNA (snoRNA) U3.

It is found in the nucleus. It localises to the nucleoplasm. The protein localises to the nucleolus. The enzyme catalyses adenosine(1779)/adenosine(1780) in 18S rRNA + 4 S-adenosyl-L-methionine = N(6)-dimethyladenosine(1779)/N(6)-dimethyladenosine(1780) in 18S rRNA + 4 S-adenosyl-L-homocysteine + 4 H(+). In terms of biological role, specifically dimethylates two adjacent adenosines in the loop of a conserved hairpin near the 3'-end of 18S rRNA in the 40S particle. Involved in the pre-rRNA processing steps leading to small-subunit rRNA production independently of its RNA-modifying catalytic activity. Part of the small subunit (SSU) processome, first precursor of the small eukaryotic ribosomal subunit. During the assembly of the SSU processome in the nucleolus, many ribosome biogenesis factors, an RNA chaperone and ribosomal proteins associate with the nascent pre-rRNA and work in concert to generate RNA folding, modifications, rearrangements and cleavage as well as targeted degradation of pre-ribosomal RNA by the RNA exosome. The polypeptide is Probable dimethyladenosine transferase (dimt1) (Dictyostelium discoideum (Social amoeba)).